A 256-amino-acid polypeptide reads, in one-letter code: Hydroxyethylthiazole kinase (256 aa).

Position 38 (methionine 38) interacts with substrate. Arginine 114 and threonine 159 together coordinate ATP. A substrate-binding site is contributed by glycine 186.

The protein belongs to the Thz kinase family. It depends on Mg(2+) as a cofactor.

The enzyme catalyses 5-(2-hydroxyethyl)-4-methylthiazole + ATP = 4-methyl-5-(2-phosphooxyethyl)-thiazole + ADP + H(+). The protein operates within cofactor biosynthesis; thiamine diphosphate biosynthesis; 4-methyl-5-(2-phosphoethyl)-thiazole from 5-(2-hydroxyethyl)-4-methylthiazole: step 1/1. Catalyzes the phosphorylation of the hydroxyl group of 4-methyl-5-beta-hydroxyethylthiazole (THZ). In Streptococcus agalactiae serotype III (strain NEM316), this protein is Hydroxyethylthiazole kinase.